A 135-amino-acid chain; its full sequence is Large ribosomal subunit protein uL22 (135 aa).

It belongs to the universal ribosomal protein uL22 family. Part of the 50S ribosomal subunit.

Its function is as follows. This protein binds specifically to 23S rRNA; its binding is stimulated by other ribosomal proteins, e.g. L4, L17, and L20. It is important during the early stages of 50S assembly. It makes multiple contacts with different domains of the 23S rRNA in the assembled 50S subunit and ribosome. In terms of biological role, the globular domain of the protein is located near the polypeptide exit tunnel on the outside of the subunit, while an extended beta-hairpin is found that lines the wall of the exit tunnel in the center of the 70S ribosome. This Malacoplasma penetrans (strain HF-2) (Mycoplasma penetrans) protein is Large ribosomal subunit protein uL22.